Here is a 368-residue protein sequence, read N- to C-terminus: Probable protein phosphatase 2C 58 (368 aa).

In terms of domain architecture, PPM-type phosphatase spans 23–329; the sequence is KFGLSSMQGW…DNMTMILVQF (307 aa). Aspartate 57, glycine 58, aspartate 272, and aspartate 320 together coordinate Mn(2+). A disordered region spans residues 336-368; it reads NKNVSPAEQSAADKQPTGDTHWSEIHVTEESSS. The span at 356–368 shows a compositional bias: basic and acidic residues; sequence HWSEIHVTEESSS.

The protein belongs to the PP2C family. Mg(2+) is required as a cofactor. It depends on Mn(2+) as a cofactor.

The enzyme catalyses O-phospho-L-seryl-[protein] + H2O = L-seryl-[protein] + phosphate. It catalyses the reaction O-phospho-L-threonyl-[protein] + H2O = L-threonyl-[protein] + phosphate. The polypeptide is Probable protein phosphatase 2C 58 (Oryza sativa subsp. japonica (Rice)).